A 96-amino-acid chain; its full sequence is NADH-ubiquinone oxidoreductase chain 4L (96 aa).

The next 3 membrane-spanning stretches (helical) occupy residues 1 to 21 (MNPT…AFYQ), 24 to 44 (LLSL…LMAI), and 57 to 77 (LPLI…VLLV).

The protein belongs to the complex I subunit 4L family.

The protein resides in the mitochondrion membrane. The catalysed reaction is a ubiquinone + NADH + 5 H(+)(in) = a ubiquinol + NAD(+) + 4 H(+)(out). Core subunit of the mitochondrial membrane respiratory chain NADH dehydrogenase (Complex I) which catalyzes electron transfer from NADH through the respiratory chain, using ubiquinone as an electron acceptor. Part of the enzyme membrane arm which is embedded in the lipid bilayer and involved in proton translocation. This Myxine glutinosa (Atlantic hagfish) protein is NADH-ubiquinone oxidoreductase chain 4L (MT-ND4L).